Reading from the N-terminus, the 152-residue chain is Endoribonuclease YbeY (152 aa).

The Zn(2+) site is built by histidine 114, histidine 118, and histidine 124.

Belongs to the endoribonuclease YbeY family. The cofactor is Zn(2+).

It is found in the cytoplasm. Its function is as follows. Single strand-specific metallo-endoribonuclease involved in late-stage 70S ribosome quality control and in maturation of the 3' terminus of the 16S rRNA. This Coxiella burnetii (strain CbuK_Q154) (Coxiella burnetii (strain Q154)) protein is Endoribonuclease YbeY.